A 194-amino-acid polypeptide reads, in one-letter code: Large ribosomal subunit protein uL6m (194 aa).

It belongs to the universal ribosomal protein uL6 family.

Its subcellular location is the mitochondrion. The sequence is that of Large ribosomal subunit protein uL6m (RPL6) from Prototheca wickerhamii.